Consider the following 150-residue polypeptide: T-complex protein 1 subunit beta (150 aa).

Asp-35 serves as a coordination point for Mg(2+). The ADP site is built by Gly-36, Thr-37, Thr-38, and Ser-39. ATP is bound by residues Gly-36, Thr-37, and Thr-38.

This sequence belongs to the TCP-1 chaperonin family. Component of the chaperonin-containing T-complex (TRiC), a hexadecamer composed of two identical back-to-back stacked rings enclosing a protein folding chamber. Each ring is made up of eight different subunits: TCP1/CCT1, CCT2, CCT3, CCT4, CCT5, CCT6A/CCT6, CCT7, CCT8. Interacts with PACRG. Interacts with FLCN. Interacts with DLEC1. Interacts with SVEP1.

It localises to the cytoplasm. The catalysed reaction is ATP + H2O = ADP + phosphate + H(+). Its function is as follows. Component of the chaperonin-containing T-complex (TRiC), a molecular chaperone complex that assists the folding of actin, tubulin and other proteins upon ATP hydrolysis. The TRiC complex mediates the folding of WRAP53/TCAB1, thereby regulating telomere maintenance. As part of the TRiC complex may play a role in the assembly of BBSome, a complex involved in ciliogenesis regulating transports vesicles to the cilia. The protein is T-complex protein 1 subunit beta of Mesocricetus auratus (Golden hamster).